Here is a 412-residue protein sequence, read N- to C-terminus: Serine hydroxymethyltransferase (412 aa).

(6S)-5,6,7,8-tetrahydrofolate contacts are provided by residues Leu117 and 121-123 (GHL). N6-(pyridoxal phosphate)lysine is present on Lys226.

It belongs to the SHMT family. Homodimer. Requires pyridoxal 5'-phosphate as cofactor.

The protein localises to the cytoplasm. It catalyses the reaction (6R)-5,10-methylene-5,6,7,8-tetrahydrofolate + glycine + H2O = (6S)-5,6,7,8-tetrahydrofolate + L-serine. The protein operates within one-carbon metabolism; tetrahydrofolate interconversion. It participates in amino-acid biosynthesis; glycine biosynthesis; glycine from L-serine: step 1/1. Functionally, catalyzes the reversible interconversion of serine and glycine with tetrahydrofolate (THF) serving as the one-carbon carrier. This reaction serves as the major source of one-carbon groups required for the biosynthesis of purines, thymidylate, methionine, and other important biomolecules. Also exhibits THF-independent aldolase activity toward beta-hydroxyamino acids, producing glycine and aldehydes, via a retro-aldol mechanism. The chain is Serine hydroxymethyltransferase from Staphylococcus epidermidis (strain ATCC 35984 / DSM 28319 / BCRC 17069 / CCUG 31568 / BM 3577 / RP62A).